A 562-amino-acid polypeptide reads, in one-letter code: Transcriptional adapter 2A (562 aa).

The segment at 91–146 (KDANRCATCRCSLTEPYIKCSECLDTLLCLQCFSRGKEAFSHRNNHAYIIVRDNIQ) adopts a ZZ-type zinc-finger fold. Zn(2+) contacts are provided by cysteine 96, cysteine 99, cysteine 110, cysteine 113, cysteine 119, cysteine 122, histidine 132, and histidine 136. The SANT domain maps to 154 to 198 (WTARDERILLKTLRTHGYGNWEAVSQALDQRHEPAEVRRHYHDCY). In terms of domain architecture, SWIRM spans 471-562 (CLTPTEYNFS…GHISRPPSYG (92 aa)).

In terms of assembly, component of the Ada2a-containing (ATAC) complex composed of at least Ada2a, Atac1, Hcf, Ada3, Gcn5, Mocs2B, Charac-14, Atac3, Atac2, NC2beta and wds. Component of a complex that does not include Gcn5 or Ada3.

The protein resides in the nucleus. The protein localises to the chromosome. Component of the histone acetyltransferase (HAT) complex ATAC; predominantly involved in acetylation of histone H4, including at Lys-6 (H4K5ac) and Lys-13 (H4K12ac). May be part of several different complexes, including Gcn5-independent complexes involved in RNA polymerase II-dependent transcription. This is Transcriptional adapter 2A from Drosophila melanogaster (Fruit fly).